Here is a 410-residue protein sequence, read N- to C-terminus: Argininosuccinate synthase (410 aa).

Residues 13–21 (AYSGGLDTS) and Ala40 each bind ATP. The L-citrulline site is built by Tyr91 and Ser96. ATP is bound at residue Gly121. L-aspartate contacts are provided by Thr123, Asn127, and Asp128. Asn127 lines the L-citrulline pocket. Residues Arg131, Ser182, Ser191, Glu267, and Tyr279 each contribute to the L-citrulline site.

It belongs to the argininosuccinate synthase family. Type 1 subfamily. As to quaternary structure, homotetramer.

The protein localises to the cytoplasm. It carries out the reaction L-citrulline + L-aspartate + ATP = 2-(N(omega)-L-arginino)succinate + AMP + diphosphate + H(+). The protein operates within amino-acid biosynthesis; L-arginine biosynthesis; L-arginine from L-ornithine and carbamoyl phosphate: step 2/3. The chain is Argininosuccinate synthase from Maricaulis maris (strain MCS10) (Caulobacter maris).